The following is a 750-amino-acid chain: Photosystem I P700 chlorophyll a apoprotein A1 (750 aa).

8 helical membrane-spanning segments follow: residues 70–93 (VFSA…FHGA), 156–179 (LYCT…FHYH), 195–219 (LNHH…HVSL), 291–309 (IAHH…GHMY), 346–369 (WHAQ…HHMY), 385–411 (LSLF…IFMV), 433–455 (AIIS…LYIH), and 531–549 (FLVH…LILL). Residues C573 and C582 each coordinate [4Fe-4S] cluster. 2 helical membrane passes run 589 to 610 (HVFL…HFSW) and 664 to 686 (LSAY…MFLF). H675 provides a ligand contact to chlorophyll a'. Residues M683 and Y691 each coordinate chlorophyll a. W692 contacts phylloquinone. A helical membrane pass occupies residues 724-744 (AVGVTHYLLGGIATTWAFFLA).

The protein belongs to the PsaA/PsaB family. As to quaternary structure, the PsaA/B heterodimer binds the P700 chlorophyll special pair and subsequent electron acceptors. PSI consists of a core antenna complex that captures photons, and an electron transfer chain that converts photonic excitation into a charge separation. The eukaryotic PSI reaction center is composed of at least 11 subunits. P700 is a chlorophyll a/chlorophyll a' dimer, A0 is one or more chlorophyll a, A1 is one or both phylloquinones and FX is a shared 4Fe-4S iron-sulfur center. serves as cofactor.

It localises to the plastid. The protein resides in the chloroplast thylakoid membrane. The catalysed reaction is reduced [plastocyanin] + hnu + oxidized [2Fe-2S]-[ferredoxin] = oxidized [plastocyanin] + reduced [2Fe-2S]-[ferredoxin]. PsaA and PsaB bind P700, the primary electron donor of photosystem I (PSI), as well as the electron acceptors A0, A1 and FX. PSI is a plastocyanin-ferredoxin oxidoreductase, converting photonic excitation into a charge separation, which transfers an electron from the donor P700 chlorophyll pair to the spectroscopically characterized acceptors A0, A1, FX, FA and FB in turn. Oxidized P700 is reduced on the lumenal side of the thylakoid membrane by plastocyanin. The sequence is that of Photosystem I P700 chlorophyll a apoprotein A1 from Solanum bulbocastanum (Wild potato).